Reading from the N-terminus, the 376-residue chain is Succinyl-diaminopimelate desuccinylase (376 aa).

His-67 is a Zn(2+) binding site. Asp-69 is an active-site residue. Asp-100 serves as a coordination point for Zn(2+). Glu-134 (proton acceptor) is an active-site residue. Positions 135, 163, and 349 each coordinate Zn(2+).

It belongs to the peptidase M20A family. DapE subfamily. In terms of assembly, homodimer. Zn(2+) is required as a cofactor. Requires Co(2+) as cofactor.

It catalyses the reaction N-succinyl-(2S,6S)-2,6-diaminopimelate + H2O = (2S,6S)-2,6-diaminopimelate + succinate. It participates in amino-acid biosynthesis; L-lysine biosynthesis via DAP pathway; LL-2,6-diaminopimelate from (S)-tetrahydrodipicolinate (succinylase route): step 3/3. Functionally, catalyzes the hydrolysis of N-succinyl-L,L-diaminopimelic acid (SDAP), forming succinate and LL-2,6-diaminopimelate (DAP), an intermediate involved in the bacterial biosynthesis of lysine and meso-diaminopimelic acid, an essential component of bacterial cell walls. The sequence is that of Succinyl-diaminopimelate desuccinylase from Nitrosomonas europaea (strain ATCC 19718 / CIP 103999 / KCTC 2705 / NBRC 14298).